The primary structure comprises 314 residues: Aspartate carbamoyltransferase catalytic subunit (314 aa).

2 residues coordinate carbamoyl phosphate: arginine 55 and threonine 56. Lysine 83 lines the L-aspartate pocket. The carbamoyl phosphate site is built by arginine 105, histidine 134, and glutamine 137. Positions 167 and 221 each coordinate L-aspartate. Positions 262 and 263 each coordinate carbamoyl phosphate.

It belongs to the aspartate/ornithine carbamoyltransferase superfamily. ATCase family. Heterododecamer (2C3:3R2) of six catalytic PyrB chains organized as two trimers (C3), and six regulatory PyrI chains organized as three dimers (R2).

The enzyme catalyses carbamoyl phosphate + L-aspartate = N-carbamoyl-L-aspartate + phosphate + H(+). Its pathway is pyrimidine metabolism; UMP biosynthesis via de novo pathway; (S)-dihydroorotate from bicarbonate: step 2/3. Catalyzes the condensation of carbamoyl phosphate and aspartate to form carbamoyl aspartate and inorganic phosphate, the committed step in the de novo pyrimidine nucleotide biosynthesis pathway. The polypeptide is Aspartate carbamoyltransferase catalytic subunit (Corynebacterium urealyticum (strain ATCC 43042 / DSM 7109)).